Reading from the N-terminus, the 409-residue chain is MEALQRQQAARLAQGVGPLAPPRLPLPQPPLLGARTLQAPEGAIGVVGAEEEEGAEDEEGETPLAEEETAEQSHPGARCPNSPSSQSPGIQPHEWTYEEQFKQLYELDADPKRKEFLDDLFSFMQKRGTPVNRVPIMAKQVLDLYALFRLVTAKGGLVEVINRKVWREVTRGLSLPTTITSAAFTLRTQYMKYLYPYECETRALSSPGELQAAIDSNRREGRRQAYTAVPLFNLAGPTPRGAPGPASSHGPAPTATPNCPGPTQGSASGLPAHACAQLSPSPVKKEESGIPPPRLALPMGLASEATREKLAPEEPPEKRAVLMGPVDSPRLGAPPSFLPRGKAPLREERLDGPLNLAGSGISSINVALEINGVVYTGILFARRQPVPASLGPTNPPPLPSTGPPSSTLP.

The span at 1-14 (MEALQRQQAARLAQ) shows a compositional bias: low complexity. The interval 1-91 (MEALQRQQAA…SPSSQSPGIQ (91 aa)) is disordered. Residues 19 to 30 (LAPPRLPLPQPP) are compositionally biased toward pro residues. Over residues 49-70 (AEEEEGAEDEEGETPLAEEETA) the composition is skewed to acidic residues. The 93-residue stretch at 110-202 (DPKRKEFLDD…YLYPYECETR (93 aa)) folds into the ARID domain. 3 disordered regions span residues 233 to 274 (NLAG…PAHA), 306 to 333 (TREK…RLGA), and 385 to 409 (PVPA…STLP). Positions 235–257 (AGPTPRGAPGPASSHGPAPTATP) are enriched in low complexity. Positions 301–386 (LASEATREKL…GILFARRQPV (86 aa)) constitute an REKLES domain. Residues 306–320 (TREKLAPEEPPEKRA) are compositionally biased toward basic and acidic residues. A compositionally biased stretch (pro residues) spans 393–402 (TNPPPLPSTG).

Interacts (via REKLES DOMAIN) with NPM1; the interaction mediates ARID3C nuclear shuttling.

The protein localises to the nucleus. Functionally, transcription factor involved in monocyte-to-macrophage differentiation. Forms a complex with NPM1 to translocate to the nucleus, acting as a transcription factor that promotes the expression of the genes involved in macrophage differentiation, such as STAT3, STAT1 and JUNB. The protein is AT-rich interactive domain-containing protein 3C (Arid3c) of Mus musculus (Mouse).